Consider the following 170-residue polypeptide: MEARSKPQFLAFLILFSVLFSQSLAWPLFGPPSVVRLDDRMPFEGAGDPDQVSLKADSDILQNPLAENGTPYYDVSRNARHADGVFTSDYSRLLGQISAKKYLESLIGKRISSSISEDPVPIKRHSDAVFTDNYTRLRKQMAVKKYLNSILNGKRSSEGDSADFLEELEK.

An N-terminal signal peptide occupies residues 1-21; that stretch reads MEARSKPQFLAFLILFSVLFS. A propeptide spanning residues 22–79 is cleaved from the precursor; that stretch reads QSLAWPLFGPPSVVRLDDRMPFEGAGDPDQVSLKADSDILQNPLAENGTPYYDVSRNA. Ser-76 is subject to Phosphoserine. At Ile-107 the chain carries Isoleucine amide. Asn-133 is a glycosylation site (N-linked (GlcNAc...) asparagine). Position 152 is an asparagine amide (Asn-152). The propeptide occupies 156-170; it reads SSEGDSADFLEELEK.

The protein belongs to the glucagon family.

It is found in the secreted. In terms of biological role, VIP is a neuropeptide involved in a diverse array of physiological processes through activating the PACAP subfamily of class B1 G protein-coupled receptors: VIP receptor 1 (VPR1) and VIP receptor 2 (VPR2). Abundantly expressed throughout the CNS and peripheral nervous systems where they primarily exert neuroprotective and immune modulatory roles. Also causes vasodilation, lowers arterial blood pressure, stimulates myocardial contractility, increases glycogenolysis and relaxes the smooth muscle of trachea, stomach and gall bladder. Its function is as follows. PHM-27 and PHV-42 are two bioactive forms from proteolysis of the same precursor protein, that cause vasodilation. PHM-27 is a potent agonist of the calcitonin receptor CALCR, with similar efficacy as calcitonin. In Mus musculus (Mouse), this protein is VIP peptides (Vip).